Reading from the N-terminus, the 404-residue chain is Calcium/calmodulin-dependent protein kinase cmkB (404 aa).

Residues 18-279 (YKTGKTLGAG…AHQALQHPWI (262 aa)) enclose the Protein kinase domain. ATP contacts are provided by residues 24–32 (LGAGLYSVV) and K47. The active-site Proton acceptor is the D141. At T179 the chain carries Phosphothreonine; by cmkC. Residues 279–322 (INPPYDTTDDLGSGEDLLPNIKKNFNARRTLHKAIDTVRAINKL) are autoinhibitory domain. Residues 301 to 323 (KNFNARRTLHKAIDTVRAINKLR) form a calmodulin-binding region. The segment at 336–404 (VDPKPEHVNG…WSRTAPRSER (69 aa)) is disordered. 2 stretches are compositionally biased toward basic and acidic residues: residues 338-370 (PKPE…DSRS) and 379-389 (QIREQERKVKE).

This sequence belongs to the protein kinase superfamily. CAMK Ser/Thr protein kinase family. CaMK subfamily. Post-translationally, phosphorylated by cmkC on Thr-179.

The enzyme catalyses L-seryl-[protein] + ATP = O-phospho-L-seryl-[protein] + ADP + H(+). It carries out the reaction L-threonyl-[protein] + ATP = O-phospho-L-threonyl-[protein] + ADP + H(+). Its activity is regulated as follows. Activated by Ca(2+)/calmodulin. Binding of calmodulin results in conformational change that relieves intrasteric autoinhibition and allows phosphorylation of Thr-179 within the activation loop by cmkC. Its function is as follows. Calcium/calmodulin-dependent protein kinase that operates in the calcium-triggered CaMKK-CaMK1 signaling cascade. Required in G1-phase of the cell cycle for proper timing of the initial nuclear division after germination, but not for subsequent mitoses. Required for the normal temporal regulation of nimX activity. The chain is Calcium/calmodulin-dependent protein kinase cmkB from Emericella nidulans (Aspergillus nidulans).